The chain runs to 759 residues: Protein YdeP (759 aa).

2 residues coordinate [4Fe-4S] cluster: C49 and C52.

Belongs to the prokaryotic molybdopterin-containing oxidoreductase family. Requires [4Fe-4S] cluster as cofactor. Mo-bis(molybdopterin guanine dinucleotide) serves as cofactor.

Probably involved in acid resistance. This Shigella flexneri protein is Protein YdeP (ydeP).